Reading from the N-terminus, the 457-residue chain is Argininosuccinate lyase (457 aa).

Belongs to the lyase 1 family. Argininosuccinate lyase subfamily.

Its subcellular location is the cytoplasm. The enzyme catalyses 2-(N(omega)-L-arginino)succinate = fumarate + L-arginine. It functions in the pathway amino-acid biosynthesis; L-arginine biosynthesis; L-arginine from L-ornithine and carbamoyl phosphate: step 3/3. This Sodalis glossinidius (strain morsitans) protein is Argininosuccinate lyase.